A 262-amino-acid chain; its full sequence is Tryptophan synthase alpha chain (262 aa).

Residues E48 and D59 each act as proton acceptor in the active site.

Belongs to the TrpA family. In terms of assembly, tetramer of two alpha and two beta chains.

It carries out the reaction (1S,2R)-1-C-(indol-3-yl)glycerol 3-phosphate + L-serine = D-glyceraldehyde 3-phosphate + L-tryptophan + H2O. The protein operates within amino-acid biosynthesis; L-tryptophan biosynthesis; L-tryptophan from chorismate: step 5/5. Its function is as follows. The alpha subunit is responsible for the aldol cleavage of indoleglycerol phosphate to indole and glyceraldehyde 3-phosphate. The polypeptide is Tryptophan synthase alpha chain (Helicobacter pylori (strain G27)).